We begin with the raw amino-acid sequence, 315 residues long: tRNA dimethylallyltransferase (315 aa).

10-17 (GPTATGKS) contributes to the ATP binding site. 12–17 (TATGKS) contacts substrate. Residues 35-38 (DSMQ) are interaction with substrate tRNA.

It belongs to the IPP transferase family. In terms of assembly, monomer. Mg(2+) serves as cofactor.

It catalyses the reaction adenosine(37) in tRNA + dimethylallyl diphosphate = N(6)-dimethylallyladenosine(37) in tRNA + diphosphate. Catalyzes the transfer of a dimethylallyl group onto the adenine at position 37 in tRNAs that read codons beginning with uridine, leading to the formation of N6-(dimethylallyl)adenosine (i(6)A). The sequence is that of tRNA dimethylallyltransferase from Caldanaerobacter subterraneus subsp. tengcongensis (strain DSM 15242 / JCM 11007 / NBRC 100824 / MB4) (Thermoanaerobacter tengcongensis).